We begin with the raw amino-acid sequence, 111 residues long: Phosphoribosyl-ATP pyrophosphatase (111 aa).

This sequence belongs to the PRA-PH family.

It is found in the cytoplasm. It carries out the reaction 1-(5-phospho-beta-D-ribosyl)-ATP + H2O = 1-(5-phospho-beta-D-ribosyl)-5'-AMP + diphosphate + H(+). Its pathway is amino-acid biosynthesis; L-histidine biosynthesis; L-histidine from 5-phospho-alpha-D-ribose 1-diphosphate: step 2/9. The protein is Phosphoribosyl-ATP pyrophosphatase of Ectopseudomonas mendocina (strain ymp) (Pseudomonas mendocina).